We begin with the raw amino-acid sequence, 520 residues long: Legumin A2 (520 aa).

The first 22 residues, 1-22, serve as a signal peptide directing secretion; that stretch reads MATKLLALSLSFCFLLLGGCFA. 2 cysteine pairs are disulfide-bonded: cysteine 32–cysteine 65 and cysteine 108–cysteine 342. A Cupin type-1 1 domain is found at 37 to 233; it reads LNALEPDNRI…AFNVNRHIVD (197 aa). Residues 250–339 form a disordered region; that stretch reads VKGGLSIISP…RRQGDNGLEE (90 aa). A Cupin type-1 2 domain is found at 348–497; it reads LNIGPSSSPD…TFNLQRNEAR (150 aa).

This sequence belongs to the 11S seed storage protein (globulins) family. Hexamer; each subunit is composed of an acidic and a basic chain derived from a single precursor and linked by a disulfide bond.

In terms of biological role, this protein found in the seeds of many leguminous and non-leguminous plants is the source of sulfur-containing amino acids in seed meals. This is Legumin A2 (LEGA2) from Pisum sativum (Garden pea).